The following is a 39-amino-acid chain: Large ribosomal subunit protein bL36 (39 aa).

The protein belongs to the bacterial ribosomal protein bL36 family.

The protein is Large ribosomal subunit protein bL36 of Limosilactobacillus reuteri (strain DSM 20016) (Lactobacillus reuteri).